We begin with the raw amino-acid sequence, 430 residues long: Paraneoplastic antigen-like protein 8A (430 aa).

A compositionally biased stretch (basic and acidic residues) spans W219–P228. Disordered stretches follow at residues W219 to Y270, D313 to K364, and G392 to L430. Positions L232–N250 are enriched in basic residues. Residues S261–Y270 show a composition bias toward polar residues.

The protein belongs to the PNMA family.

This is Paraneoplastic antigen-like protein 8A from Mus musculus (Mouse).